Reading from the N-terminus, the 305-residue chain is U6 small nuclear RNA (adenine-(43)-N(6))-methyltransferase (305 aa).

S-adenosyl-L-methionine-binding residues include Arg87, Gly112, Glu135, Thr166, and Asn188. The interval 197–221 (PNPLGGNTRNPERRPAPNNARTGSQ) is disordered.

It belongs to the methyltransferase superfamily. METTL16/RlmF family.

It catalyses the reaction adenosine in U6 snRNA + S-adenosyl-L-methionine = N(6)-methyladenosine in U6 snRNA + S-adenosyl-L-homocysteine + H(+). Its function is as follows. RNA N6-methyltransferase that mediates N6-methylation of adenine of U6 small nuclear RNA (U6 snRNA). This is U6 small nuclear RNA (adenine-(43)-N(6))-methyltransferase from Drosophila melanogaster (Fruit fly).